The sequence spans 841 residues: MLLCTARLVGLQLLISCCWAFACHSTESSPDFTLPGDYLLAGLFPLHSGCLQVRHRPEVTLCDRSCSFNEHGYHLFQAMRLGVEEINNSTALLPNITLGYQLYDVCSDSANVYATLRVLSLPGQHHIELQGDLLHYSPTVLAVIGPDSTNRAATTAALLSPFLVPMISYAASSETLSVKRQYPSFLRTIPNDKYQVETMVLLLQKFGWTWISLVGSSDDYGQLGVQALENQATGQGICIAFKDIMPFSAQVGDERMQCLMRHLAQAGATVVVVFSSRQLARVFFESVVLTNLTGKVWVASEAWALSRHITGVPGIQRIGMVLGVAIQKRAVPGLKAFEEAYARADKKAPRPCHKGSWCSSNQLCRECQAFMAHTMPKLKAFSMSSAYNAYRAVYAVAHGLHQLLGCASGACSRGRVYPWQLLEQIHKVHFLLHKDTVAFNDNRDPLSSYNIIAWDWNGPKWTFTVLGSSTWSPVQLNINETKIQWHGKDNQVPKSVCSSDCLEGHQRVVTGFHHCCFECVPCGAGTFLNKSDLYRCQPCGKEEWAPEGSQTCFPRTVVFLALREHTSWVLLAANTLLLLLLLGTAGLFAWHLDTPVVRSAGGRLCFLMLGSLAAGSGSLYGFFGEPTRPACLLRQALFALGFTIFLSCLTVRSFQLIIIFKFSTKVPTFYHAWVQNHGAGLFVMISSAAQLLICLTWLVVWTPLPAREYQRFPHLVMLECTETNSLGFILAFLYNGLLSISAFACSYLGKDLPENYNEAKCVTFSLLFNFVSWIAFFTTASVYDGKYLPAANMMAGLSSLSSGFGGYFLPKCYVILCRPDLNSTEHFQASIQDYTRRCGST.

The first 20 residues, 1-20, serve as a signal peptide directing secretion; it reads MLLCTARLVGLQLLISCCWA. Residues 21 to 567 are Extracellular-facing; sequence FACHSTESSP…VFLALREHTS (547 aa). N87, N88, N95, N291, N479, and N529 each carry an N-linked (GlcNAc...) asparagine glycan. Residues 568–588 form a helical membrane-spanning segment; that stretch reads WVLLAANTLLLLLLLGTAGLF. The Cytoplasmic portion of the chain corresponds to 589–603; that stretch reads AWHLDTPVVRSAGGR. A helical membrane pass occupies residues 604 to 624; sequence LCFLMLGSLAAGSGSLYGFFG. The Extracellular segment spans residues 625-639; that stretch reads EPTRPACLLRQALFA. A helical membrane pass occupies residues 640-660; sequence LGFTIFLSCLTVRSFQLIIIF. At 661-680 the chain is on the cytoplasmic side; it reads KFSTKVPTFYHAWVQNHGAG. Residues 681 to 701 form a helical membrane-spanning segment; that stretch reads LFVMISSAAQLLICLTWLVVW. The Extracellular portion of the chain corresponds to 702–725; sequence TPLPAREYQRFPHLVMLECTETNS. A helical membrane pass occupies residues 726-746; that stretch reads LGFILAFLYNGLLSISAFACS. Topologically, residues 747-761 are cytoplasmic; it reads YLGKDLPENYNEAKC. Residues 762–782 form a helical membrane-spanning segment; the sequence is VTFSLLFNFVSWIAFFTTASV. Topologically, residues 783-795 are extracellular; sequence YDGKYLPAANMMA. A helical membrane pass occupies residues 796–816; that stretch reads GLSSLSSGFGGYFLPKCYVIL. At 817–841 the chain is on the cytoplasmic side; sequence CRPDLNSTEHFQASIQDYTRRCGST.

It belongs to the G-protein coupled receptor 3 family. TAS1R subfamily. As to quaternary structure, forms heterodimers with TAS1R3.

It localises to the cell membrane. In terms of biological role, putative taste receptor. TAS1R1/TAS1R3 responds to the umami taste stimulus (the taste of monosodium glutamate). Sequence differences within and between species can significantly influence the selectivity and specificity of taste responses. This is Taste receptor type 1 member 1 (TAS1R1) from Homo sapiens (Human).